A 1058-amino-acid polypeptide reads, in one-letter code: Lon protease homolog, mitochondrial (1058 aa).

Residues 1–47 (MLTRIRNAGVGGNAARRVRLLAGYTGARMAHAAALNSTTGAGGAARA) constitute a mitochondrion transit peptide. A disordered region spans residues 72–151 (GGQCILKQDR…RSNPPSEGEV (80 aa)). Basic and acidic residues-rich tracts occupy residues 78-97 (KQDR…RAEE) and 106-118 (DEEA…EEQA). Residues 129–142 (GSGGSASSAGGGGR) are compositionally biased toward gly residues. The Lon N-terminal domain occupies 158-412 (LMVLPMSNRP…KALVFIKKEV (255 aa)). Residue 564 to 571 (GPPGVGKT) coordinates ATP. Residues 778–814 (TPKSAPAETNIEPENGKPDASAKPLTNNLPAPEPLNI) form a disordered region. Residues 844–1030 (KTPAGVVMGL…DDVFNVLFGS (187 aa)) enclose the Lon proteolytic domain. Catalysis depends on residues S936 and K979.

The protein belongs to the peptidase S16 family. Homohexamer or homoheptamer. Organized in a ring with a central cavity.

The protein resides in the mitochondrion matrix. The catalysed reaction is Hydrolysis of proteins in presence of ATP.. In terms of biological role, ATP-dependent serine protease that mediates the selective degradation of misfolded, unassembled or oxidatively damaged polypeptides as well as certain short-lived regulatory proteins in the mitochondrial matrix. May also have a chaperone function in the assembly of inner membrane protein complexes. Participates in the regulation of mitochondrial gene expression and in the maintenance of the integrity of the mitochondrial genome. Binds to mitochondrial DNA in a site-specific manner. The protein is Lon protease homolog, mitochondrial of Eremothecium gossypii (strain ATCC 10895 / CBS 109.51 / FGSC 9923 / NRRL Y-1056) (Yeast).